A 314-amino-acid polypeptide reads, in one-letter code: MNSSIVSQHFFISLKSSLDLQCWKSSSPSSISMGEFKGIHDKLQILKLPLTMSDRGLSKISCSLSLQTEKLRYDNDDNDDLELHEELIPKHIALIMDGNRRWAKAKGLEVYEGHKLIIPKLKEICDISSKLGIQVITAFAFSTENWKRSKEEVDFLMQLFEEFFNEFLRFGVRVSVIGCKSNLPMTLQKCIALTEETTKGNKGLHLVIALNYGGYYDILQATKSIVNKAMNGLLDVEDINKNLFEQELESKCPNPDLLIRTGGEQRVSNFLLWQLAYTEFYFTNTLFPDFGEKDLKKAILNFQQRHRRFGGHTY.

A chloroplast-targeting transit peptide spans 1 to 61 (MNSSIVSQHF…MSDRGLSKIS (61 aa)). Aspartate 97 is an active-site residue.

The protein belongs to the UPP synthase family. The cofactor is Mg(2+). As to expression, expressed in stems. Expressed in petiolules. Expressed at low levels in leaf trichomes, old leaf and roots.

Its subcellular location is the plastid. It is found in the chloroplast. It carries out the reaction 3 isopentenyl diphosphate + dimethylallyl diphosphate = nerylneryl diphosphate + 3 diphosphate. The catalysed reaction is isopentenyl diphosphate + dimethylallyl diphosphate = neryl diphosphate + diphosphate. It catalyses the reaction neryl diphosphate + isopentenyl diphosphate = (2Z,6Z)-farnesyl diphosphate + diphosphate. The enzyme catalyses (2Z,6Z)-farnesyl diphosphate + isopentenyl diphosphate = nerylneryl diphosphate + diphosphate. Uses dimethylallyl diphosphate and isopentenyl diphosphate to catalyze the cis-prenyl chain elongation and produce the 20 carbon product nerylneryl diphosphate. This chain is Nerylneryl diphosphate synthase CPT2, chloroplastic, found in Solanum lycopersicum (Tomato).